The sequence spans 997 residues: Protein translocase subunit SecA (997 aa).

Residues Q84, 102 to 106, and D582 contribute to the ATP site; that span reads GEGKT. The tract at residues 950–997 is disordered; it reads PYVPVPEAKPEPSEVFGVERKRATPPPQPGLSRAERRRLMRQEKKRKK. Positions 957 to 971 are enriched in basic and acidic residues; sequence AKPEPSEVFGVERKR. Over residues 984–997 the composition is skewed to basic residues; the sequence is ERRRLMRQEKKRKK.

The protein belongs to the SecA family. Monomer and homodimer. Part of the essential Sec protein translocation apparatus which comprises SecA, SecYEG and auxiliary proteins SecDF. Other proteins may also be involved.

The protein resides in the cell inner membrane. It is found in the cytoplasm. The enzyme catalyses ATP + H2O + cellular proteinSide 1 = ADP + phosphate + cellular proteinSide 2.. In terms of biological role, part of the Sec protein translocase complex. Interacts with the SecYEG preprotein conducting channel. Has a central role in coupling the hydrolysis of ATP to the transfer of proteins into and across the cell membrane, serving as an ATP-driven molecular motor driving the stepwise translocation of polypeptide chains across the membrane. The sequence is that of Protein translocase subunit SecA from Thermus thermophilus (strain ATCC BAA-163 / DSM 7039 / HB27).